Here is a 633-residue protein sequence, read N- to C-terminus: uncharacterized protein (633 aa).

The interval 12-43 (ESGTNNYSDTIANGNTLPPRSKKGHSGRRKRS) is disordered. Residues 13–29 (SGTNNYSDTIANGNTLP) are compositionally biased toward polar residues. Basic residues predominate over residues 31-42 (RSKKGHSGRRKR). Transmembrane regions (helical) follow at residues 99–118 (ILFG…SSAL) and 217–233 (NCAF…ITAC). Residues 593–612 (DAETNKATGSAKSENIETKS) form a disordered region.

The protein resides in the membrane. This is an uncharacterized protein from Saccharomyces cerevisiae (strain ATCC 204508 / S288c) (Baker's yeast).